The primary structure comprises 204 residues: Large ribosomal subunit protein eL15 (204 aa).

This sequence belongs to the eukaryotic ribosomal protein eL15 family.

In Chironomus tentans (Midge), this protein is Large ribosomal subunit protein eL15 (RpL15).